The primary structure comprises 264 residues: Proteasome subunit beta type-4 (264 aa).

Residue methionine 1 is modified to N-acetylmethionine. The propeptide occupies 1–45; it reads MEAFLGSRSGLWAGGPAPGQFYRIPSTPDSFMDPASALYRGPITR. Position 26 is a phosphoserine (serine 26). Phosphotyrosine is present on tyrosine 102.

Belongs to the peptidase T1B family. The 26S proteasome consists of a 20S proteasome core and two 19S regulatory subunits. The 20S proteasome core is a barrel-shaped complex made of 28 subunits that are arranged in four stacked rings. The two outer rings are each formed by seven alpha subunits, and the two inner rings are formed by seven beta subunits. The proteolytic activity is exerted by three beta-subunits PSMB5, PSMB6 and PSMB7. Forms a ternary complex with SMAD1 and OAZ1 before PSMB4 is incorporated into the 20S proteasome. Interacts with PRPF19. As to quaternary structure, (Microbial infection) Interacts with HTLV-1 Tax protein. In terms of assembly, (Microbial infection) Interacts with HIV-1 Nef and Tat proteins.

Its subcellular location is the cytoplasm. It is found in the nucleus. Its function is as follows. Non-catalytic component of the 20S core proteasome complex involved in the proteolytic degradation of most intracellular proteins. This complex plays numerous essential roles within the cell by associating with different regulatory particles. Associated with two 19S regulatory particles, forms the 26S proteasome and thus participates in the ATP-dependent degradation of ubiquitinated proteins. The 26S proteasome plays a key role in the maintenance of protein homeostasis by removing misfolded or damaged proteins that could impair cellular functions, and by removing proteins whose functions are no longer required. Associated with the PA200 or PA28, the 20S proteasome mediates ubiquitin-independent protein degradation. This type of proteolysis is required in several pathways including spermatogenesis (20S-PA200 complex) or generation of a subset of MHC class I-presented antigenic peptides (20S-PA28 complex). SMAD1/OAZ1/PSMB4 complex mediates the degradation of the CREBBP/EP300 repressor SNIP1. In Homo sapiens (Human), this protein is Proteasome subunit beta type-4.